The following is a 100-amino-acid chain: MQRRTQELIWKELVDNSHKLFCNCMDPQNHYRLICQNLNREPGEPWRTAGGIGEGGAGGDGAAAGGEGDVHGRPAGAEDGEDGADAAMAAALAAFEDATG.

The segment at 42–84 is disordered; that stretch reads PGEPWRTAGGIGEGGAGGDGAAAGGEGDVHGRPAGAEDGEDGA. Residues 50–67 are compositionally biased toward gly residues; the sequence is GGIGEGGAGGDGAAAGGE.

This is an uncharacterized protein from Torque teno tamarin virus (isolate So-TTV2).